The sequence spans 1364 residues: ABC-type transporter cns4 (1364 aa).

An ABC transporter 1 domain is found at 42 to 290 (SRVKESRAKP…MEEMGFLYTD (249 aa)). N-linked (GlcNAc...) asparagine glycans are attached at residues Asn152 and Asn214. Transmembrane regions (helical) follow at residues 435 to 455 (LFFAVLLNALLSMSEVTGSFA), 483 to 503 (IPLIAMQVTLFALPVYWMTGL), 508 to 528 (EAFLTYWIITISVTMCMTALF), 540 to 560 (AAIKVTGFLMSALIMYTGFLI), and 567 to 587 (PWLGWIFWINPLAYGYEAVLS). N-linked (GlcNAc...) asparagine glycosylation occurs at Asn610. Residues 650 to 670 (FAIVWVWWALFVILTVYFTSN) form a helical membrane-spanning segment. N-linked (GlcNAc...) asparagine glycans are attached at residues Asn689, Asn711, and Asn739. Residues 697-732 (DEEVGSGPDSHDSRNRSGISPIGDKQETSTDGPSKI) are disordered. Residues 737–985 (IRNTSVFTWK…TVNEYFGRNG (249 aa)) enclose the ABC transporter 2 domain. 779 to 786 (GSSGAGKT) contributes to the ATP binding site. 6 helical membrane passes run 1076 to 1094 (LMLHITSGLLNGFSFWKIG), 1105 to 1125 (FTIFNFIFVAPGVIAQLQPLF), 1146 to 1166 (AFATGLIVSELPYLVVCAVVY), 1185 to 1205 (AVFFVVLMYEFIYTGIGQAIA), 1211 to 1231 (AIFAVLINPLIIAILVFFCGV), and 1245 to 1265 (WLYYLDPFNYLMGSLLIFTTF).

It belongs to the ABC transporter superfamily. ABCG family. PDR (TC 3.A.1.205) subfamily.

The protein localises to the cell membrane. Its function is as follows. ABC-type transporter; part of the gene cluster that mediates the biosynthesis of cordycepin (COR) and pentostatin (PTN), two adenosine analogs with related bioactivity profiles as both mimic adenosine and can inhibit some of the processes that are adenosine dependent. Mediates the pumping of pentostatin but not of cordycepin out of fungal cells. Decreasing intracellular pentostatin releases adenosine deaminase (ADA) inhibition, allowing ADA to deaminate cordycepin into non-toxic 3'-d. The chain is ABC-type transporter cns4 from Cordyceps militaris (strain CM01) (Caterpillar fungus).